Reading from the N-terminus, the 127-residue chain is Small ribosomal subunit protein eS8 (127 aa).

This sequence belongs to the eukaryotic ribosomal protein eS8 family. Part of the 30S ribosomal subunit.

The protein is Small ribosomal subunit protein eS8 of Nanoarchaeum equitans (strain Kin4-M).